We begin with the raw amino-acid sequence, 442 residues long: SPRY domain-containing protein 3 (442 aa).

The B30.2/SPRY domain occupies 17 to 204 (DLNLHYRFLN…VRLHLNAELG (188 aa)). Residues 371-394 (EGEEEEEEEEEEEDGEEIEPEHEG) are disordered. Positions 372–390 (GEEEEEEEEEEEDGEEIEP) are enriched in acidic residues.

This Pongo abelii (Sumatran orangutan) protein is SPRY domain-containing protein 3 (SPRYD3).